Consider the following 134-residue polypeptide: Profilin (134 aa).

This sequence belongs to the profilin family. Interacts with host Tpm1. Interacts with protein A25.

It localises to the host cytoplasm. Its function is as follows. Participates in either intracellular transport of viral proteins or intercellular spread of the virus. Cellular profilins modulate actin filament dynamics (polymerization and depolymerization) via direct binding to actin through an actin-binding domain as well as by modulation of other actin-binding proteins. In contrast to cellular homologs, the poxvirus profilins seem to bind actin only weakly. In Ectromelia virus (strain Moscow) (ECTV), this protein is Profilin.